The following is a 315-amino-acid chain: Olfactory receptor 4A5 (315 aa).

The Extracellular portion of the chain corresponds to 1–23 (MRQNNNITEFVLLGFSQDPGVQK). Asn-6 carries N-linked (GlcNAc...) asparagine glycosylation. The chain crosses the membrane as a helical span at residues 24–47 (ALFVMFLLTYLVTVVGNLLIVVDI). Residues 48 to 55 (IASPSLGS) are Cytoplasmic-facing. A helical membrane pass occupies residues 56–77 (PMYFFLACLSFIDAAYSTTISP). At 78-98 (KLIVGLFCDKKTISFQGCMGQ) the chain is on the extracellular side. Cys-95 and Cys-186 are disulfide-bonded. The helical transmembrane segment at 99–118 (LFIDHFFGGAEVFLLVVMAC) threads the bilayer. The Cytoplasmic portion of the chain corresponds to 119 to 137 (DRYVAICKPLHYLTIMNRQ). Residues 138 to 156 (VCFLLLVVAMIGGFVHSAF) form a helical membrane-spanning segment. Over 157 to 192 (QIVVYSLPFCGPNVIVHFSCDMHPLLELACTDTYFI) the chain is Extracellular. Residues 193–216 (GLTVVVNSGAICMVIFNLLLISYG) form a helical membrane-spanning segment. The Cytoplasmic segment spans residues 217-232 (VILSSLKTYSQEKRGK). The helical transmembrane segment at 233–255 (ALSTCSSGSTVVVLFFVPCIFIY) threads the bilayer. Over 256-266 (VRPVSNFPTDK) the chain is Extracellular. Residues 267 to 286 (FMTVFYTIITHMLSPLIYTL) traverse the membrane as a helical segment. At 287–315 (RNSEMRNAIEKLLGKKLTIFIIGGVSVLM) the chain is on the cytoplasmic side.

The protein belongs to the G-protein coupled receptor 1 family.

The protein resides in the cell membrane. Functionally, odorant receptor. The chain is Olfactory receptor 4A5 (OR4A5) from Homo sapiens (Human).